Consider the following 498-residue polypeptide: Lysine--tRNA ligase (498 aa).

Mg(2+) is bound by residues Glu-407 and Glu-414.

The protein belongs to the class-II aminoacyl-tRNA synthetase family. In terms of assembly, homodimer. Mg(2+) serves as cofactor.

The protein localises to the cytoplasm. It carries out the reaction tRNA(Lys) + L-lysine + ATP = L-lysyl-tRNA(Lys) + AMP + diphosphate. This Rhizobium etli (strain ATCC 51251 / DSM 11541 / JCM 21823 / NBRC 15573 / CFN 42) protein is Lysine--tRNA ligase.